A 239-amino-acid chain; its full sequence is RING finger protein 151 (239 aa).

The RING-type zinc-finger motif lies at 20-58 (CSVCHGVLKRPTRLPCSHIFCKKCIFRWLARQNTCPCCR). Residues 101–156 (EHQDSCPFELMACPNEGCTVQVLRGVLDEHRQHCQQNGQQRCPLGCGSTLAALEGE) form a TRAF-type zinc finger.

As to quaternary structure, interacts with DTNBP1. In terms of tissue distribution, expressed in testis. Expressed in round spermatids of the stages VII-VIII semniniferous tubules. Expressed in elongating spermatids of stages VIII-IX seminiferous tubules (at protein level).

It localises to the cytoplasm. The protein resides in the nucleus. In terms of biological role, may be involved in acrosome formation of spermatids. The sequence is that of RING finger protein 151 (Rnf151) from Mus musculus (Mouse).